We begin with the raw amino-acid sequence, 620 residues long: Protein CNGC15b (620 aa).

Transmembrane regions (helical) follow at residues 73 to 93, 102 to 122, 161 to 181, 198 to 218, 237 to 257, and 356 to 376; these read IFLV…YLPI, IGIA…VFYV, GFFL…WIVI, FIII…SSQI, LMLY…LSIE, and GEIM…ALLI. 462–559 is a binding site for a nucleoside 3',5'-cyclic phosphate; the sequence is LFDAMDERML…SSTRTVKAIS (98 aa).

It belongs to the cyclic nucleotide-gated cation channel (TC 1.A.1.5) family. As to quaternary structure, interacts (via N-terminus) with DMI1 (via c-terminus). The Nod factor has no effect on this interaction, implying that the complex is maintained after activation. In terms of tissue distribution, expressed in roots, stems, leaves, flowers and pods.

The protein resides in the nucleus membrane. Its function is as follows. Cyclic nucleotide-gated channel involved in the establishment of both rhizobial and mycorrhizal associations. Required for full activation of nuclear-localized Ca(2+) oscillations by Nod and Myc factors. Simultaneous activation of the K(+)-permeable channel DMI1 and the Ca(2+) channel CNGC15 can give rise to sustained Ca(2+) oscillations. May function during fertilization in both female and male gametophytic Ca(2+) signaling. This Medicago truncatula (Barrel medic) protein is Protein CNGC15b.